We begin with the raw amino-acid sequence, 769 residues long: Phosphoribosylformylglycinamidine synthase subunit PurL (769 aa).

Residues 1–13 are compositionally biased toward polar residues; the sequence is MTGTPSAPTTSPD. The disordered stretch occupies residues 1 to 30; it reads MTGTPSAPTTSPDDQADGPGEGTVDRQPYR. Residue His-65 is part of the active site. Residues Tyr-68 and Lys-109 each contribute to the ATP site. Position 111 (Glu-111) interacts with Mg(2+). Substrate contacts are provided by residues 112-115 and Arg-134; that span reads SHNH. His-113 serves as the catalytic Proton acceptor. Position 135 (Asp-135) interacts with Mg(2+). Gln-260 lines the substrate pocket. Position 288 (Asp-288) interacts with Mg(2+). 337-339 lines the substrate pocket; the sequence is ESQ. Positions 524 and 561 each coordinate ATP. Mg(2+) is bound at residue Asn-562. Substrate is bound at residue Ser-564.

Belongs to the FGAMS family. Monomer. Part of the FGAM synthase complex composed of 1 PurL, 1 PurQ and 2 PurS subunits.

The protein localises to the cytoplasm. It catalyses the reaction N(2)-formyl-N(1)-(5-phospho-beta-D-ribosyl)glycinamide + L-glutamine + ATP + H2O = 2-formamido-N(1)-(5-O-phospho-beta-D-ribosyl)acetamidine + L-glutamate + ADP + phosphate + H(+). It functions in the pathway purine metabolism; IMP biosynthesis via de novo pathway; 5-amino-1-(5-phospho-D-ribosyl)imidazole from N(2)-formyl-N(1)-(5-phospho-D-ribosyl)glycinamide: step 1/2. Part of the phosphoribosylformylglycinamidine synthase complex involved in the purines biosynthetic pathway. Catalyzes the ATP-dependent conversion of formylglycinamide ribonucleotide (FGAR) and glutamine to yield formylglycinamidine ribonucleotide (FGAM) and glutamate. The FGAM synthase complex is composed of three subunits. PurQ produces an ammonia molecule by converting glutamine to glutamate. PurL transfers the ammonia molecule to FGAR to form FGAM in an ATP-dependent manner. PurS interacts with PurQ and PurL and is thought to assist in the transfer of the ammonia molecule from PurQ to PurL. The polypeptide is Phosphoribosylformylglycinamidine synthase subunit PurL (Parafrankia sp. (strain EAN1pec)).